Consider the following 501-residue polypeptide: Phosphoethanolamine N-methyltransferase 1 (501 aa).

Positions 72, 77, 93, 118, 119, and 137 each coordinate S-adenosyl-L-homocysteine. The phosphocholine site is built by S170, T175, G176, R180, and Y187. N-methylethanolamine phosphate is bound by residues 256–257 and Y265; that span reads QY. Y265 is a phosphocholine binding site. S-adenosyl-L-homocysteine is bound by residues V274, S275, G301, D323, D349, C350, and R366. Residues Y397, Y411, R415, Y417, and K483 each contribute to the phosphocholine site. N-methylethanolamine phosphate contacts are provided by residues Y397, Y411, 415–417, and K483; that span reads RGY.

This sequence belongs to the class I-like SAM-binding methyltransferase superfamily. PEAMT family.

The catalysed reaction is phosphoethanolamine + S-adenosyl-L-methionine = N-methylethanolamine phosphate + S-adenosyl-L-homocysteine + H(+). It carries out the reaction N-methylethanolamine phosphate + S-adenosyl-L-methionine = N,N-dimethylethanolamine phosphate + S-adenosyl-L-homocysteine + H(+). The enzyme catalyses N,N-dimethylethanolamine phosphate + S-adenosyl-L-methionine = phosphocholine + S-adenosyl-L-homocysteine + H(+). It functions in the pathway phospholipid metabolism; phosphatidylcholine biosynthesis; phosphocholine from phosphoethanolamine: step 1/1. In terms of biological role, involved in phosphocholine biosynthesis. Catalyzes the N-methylation of phosphoethanolamine, phosphomonomethylethanolamine and phosphodimethylethanolamine, the three methylation steps required to convert phosphoethanolamine to phosphocholine (PC). May be involved in root development. The protein is Phosphoethanolamine N-methyltransferase 1 of Zea mays (Maize).